A 285-amino-acid chain; its full sequence is MPAATVDHSQRICEVWACNLDDQMKRIRQVIRKYNYVAMDTEFPGVVARPIGEFRSNADYQYQLLRCNVDLLKIIQLGLTFMNEQGEYPPGTSTWQFNFKFNLTEDMYAQDSIELLTSSGIQFKKHEEEGIETQYFAELFMTSGVVLCEGVKWLSFHSGYDFGYLIKILTNSNLPEVEQDFFEILRLFFPVIYDVKYLMKSCKNLKGGLQEVAEQLELERIGPQHQAGSDSLLTGMAFFKMREMFFEDHIDDAKYCGHLYGLGSGSSYVQNGTGNAYEEEANKQS.

Residues aspartate 40, glutamate 42, aspartate 161, aspartate 230, and glutamate 278 each contribute to the a divalent metal cation site.

It belongs to the CAF1 family. As to quaternary structure, component of the CCR4-NOT complex. Requires Mn(2+) as cofactor. Mg(2+) is required as a cofactor. The cofactor is Co(2+).

The protein localises to the nucleus. The protein resides in the cytoplasm. The catalysed reaction is Exonucleolytic cleavage of poly(A) to 5'-AMP.. In terms of biological role, has 3'-5' poly(A) exoribonuclease activity for synthetic poly(A) RNA substrate. Catalytic component of the CCR4-NOT complex which is one of the major cellular mRNA deadenylases and is linked to various cellular processes including bulk mRNA degradation, miRNA-mediated repression, translational repression during translational initiation and general transcription regulation. During miRNA-mediated repression the complex also seems to act as translational repressor during translational initiation. Additional complex functions may be a consequence of its influence on mRNA expression. The polypeptide is CCR4-NOT transcription complex subunit 7 (cnot7) (Xenopus laevis (African clawed frog)).